The sequence spans 194 residues: Imidazole glycerol phosphate synthase subunit HisH (194 aa).

In terms of domain architecture, Glutamine amidotransferase type-1 spans 3–194; it reads RIAIVDLGIG…LILLRNFRRL (192 aa). The active-site Nucleophile is C74. Catalysis depends on residues H176 and E178.

Heterodimer of HisH and HisF.

The protein resides in the cytoplasm. It catalyses the reaction 5-[(5-phospho-1-deoxy-D-ribulos-1-ylimino)methylamino]-1-(5-phospho-beta-D-ribosyl)imidazole-4-carboxamide + L-glutamine = D-erythro-1-(imidazol-4-yl)glycerol 3-phosphate + 5-amino-1-(5-phospho-beta-D-ribosyl)imidazole-4-carboxamide + L-glutamate + H(+). The enzyme catalyses L-glutamine + H2O = L-glutamate + NH4(+). It functions in the pathway amino-acid biosynthesis; L-histidine biosynthesis; L-histidine from 5-phospho-alpha-D-ribose 1-diphosphate: step 5/9. IGPS catalyzes the conversion of PRFAR and glutamine to IGP, AICAR and glutamate. The HisH subunit catalyzes the hydrolysis of glutamine to glutamate and ammonia as part of the synthesis of IGP and AICAR. The resulting ammonia molecule is channeled to the active site of HisF. This is Imidazole glycerol phosphate synthase subunit HisH from Pyrococcus furiosus (strain ATCC 43587 / DSM 3638 / JCM 8422 / Vc1).